A 310-amino-acid polypeptide reads, in one-letter code: Taste receptor type 2 member 125 (310 aa).

Topologically, residues 1 to 2 are extracellular; that stretch reads MG. Residues 3 to 23 form a helical membrane-spanning segment; that stretch reads IVIGIICAFIIIVQFIIGNVA. At 24–46 the chain is on the cytoplasmic side; sequence NGFIALVNIIDWVKRRKISLVDQ. A helical transmembrane segment spans residues 47–67; the sequence is IITALAISRIDMLCSTFLIVL. Residues 68–87 are Extracellular-facing; sequence ITSLYPDLNTAVNMVKISNN. The chain crosses the membrane as a helical span at residues 88–108; sequence IWIVANHFSIWLATSLSIFYF. Over 109–128 the chain is Cytoplasmic; the sequence is LKIANFSNYVFLCLRWRLSK. A helical membrane pass occupies residues 129 to 149; it reads VVSVTLLLSLVLLLMNILIMN. Residues 150-185 lie on the Extracellular side of the membrane; that stretch reads MHIDTWSDGFKRNVSFGFRSKNCTRFFKLALLINTT. N-linked (GlcNAc...) asparagine glycans are attached at residues Asn162, Asn171, and Asn183. The helical transmembrane segment at 186–206 threads the bilayer; that stretch reads FTCVPFTVSMVAFLLLIFSLW. At 207 to 232 the chain is on the cytoplasmic side; the sequence is RHLKNMQYHAKGSRDPSTAVHIKALQ. The helical transmembrane segment at 233–253 threads the bilayer; that stretch reads MVVVFVLFYTFFFLSLAIQLW. Topologically, residues 254–261 are extracellular; that stretch reads TSESLEKN. Residues 262–282 traverse the membrane as a helical segment; sequence NLFYVTLIITFPSVHSCMLIL. The Cytoplasmic portion of the chain corresponds to 283–310; it reads RNSKLRQASLLVLWWLLCRSKDIQTLVP.

Belongs to the G-protein coupled receptor T2R family.

Its subcellular location is the membrane. Putative taste receptor which may play a role in the perception of bitterness. This Rattus norvegicus (Rat) protein is Taste receptor type 2 member 125.